The primary structure comprises 109 residues: ATPase inhibitor mai-2, mitochondrial (109 aa).

Disordered regions lie at residues 18–39 (FSAG…SIRD) and 73–109 (EEVK…LGKE). The span at 21-35 (GGHGDGAGRGGGSGG) shows a compositional bias: gly residues. Residues 55–109 (YFYKKQKAQLQELREHIQEEVKHHEGQLENHKKVLERHQQRISEIEAQERALGKE) are a coiled coil.

The protein belongs to the ATPase inhibitor family.

It localises to the mitochondrion. Its function is as follows. Thought to be a regulatory component of the ATP-synthesizing complex in the mitochondria. Activity is pH dependent. This Caenorhabditis elegans protein is ATPase inhibitor mai-2, mitochondrial (mai-2).